Here is a 504-residue protein sequence, read N- to C-terminus: MSFSVEVLARIAIELQTGIGHQDRFQRLISTLRHVLDCDASALLRYEGRQFIPLAIDGLAHDVLGRRFTLEGHPRLETIARAGDVVRFPADSDLPDPYDGLIPGQESLKVHACIGLPLFAGQNLIGALTLDGLEPDQFDTFSDEELRLIAALASGALNNALLIEQLESQNIMPGSPVAFEHVAHTEMIGLSPGMMQLKKEIEIVAASDLNVLIGGETGTGKELVAKSIHEASPRAVNPLVYLNCAALPESVAESELFGHVKGAFTGAISNRSGKFEMADNGTLFLDEIGELSLALQAKLLRVLQYGDIQRVGDDRSLRVDVRVLAATNRDLREEVLAGNFRADLFHRLSVFPLSVPPLRERGEDVVLLAGFFCEQCRLKMGLSRVVLSPGARSHLLSYGWPGNVRELEHAIHRAVVLARAARLGDDVVIHARHFALHDEAAPAVAQELPAIANENLREATEAFQRQMITRALDQNGRSWAACARALEMDVANLHRLAKRLGLKG.

Position 57 is a 4-aspartylphosphate (Asp57). In terms of domain architecture, Sigma-54 factor interaction spans 187–416 (MIGLSPGMMQ…LEHAIHRAVV (230 aa)). Residues 215–222 (GETGTGKE) and 278–287 (ADNGTLFLDE) each bind ATP. Residues 479–498 (WAACARALEMDVANLHRLAK) constitute a DNA-binding region (H-T-H motif).

Its pathway is nitrogen metabolism; nitric oxide reduction. Its function is as follows. Required for the expression of anaerobic nitric oxide (NO) reductase, acts as a transcriptional activator for at least the norVW operon. Activation also requires sigma-54. This is Anaerobic nitric oxide reductase transcription regulator NorR from Enterobacter sp. (strain 638).